The following is a 491-amino-acid chain: Glutamyl-tRNA(Gln) amidotransferase subunit A (491 aa).

Active-site charge relay system residues include K76 and S154. S178 serves as the catalytic Acyl-ester intermediate.

It belongs to the amidase family. GatA subfamily. In terms of assembly, heterotrimer of A, B and C subunits.

The catalysed reaction is L-glutamyl-tRNA(Gln) + L-glutamine + ATP + H2O = L-glutaminyl-tRNA(Gln) + L-glutamate + ADP + phosphate + H(+). Its function is as follows. Allows the formation of correctly charged Gln-tRNA(Gln) through the transamidation of misacylated Glu-tRNA(Gln) in organisms which lack glutaminyl-tRNA synthetase. The reaction takes place in the presence of glutamine and ATP through an activated gamma-phospho-Glu-tRNA(Gln). The protein is Glutamyl-tRNA(Gln) amidotransferase subunit A of Cereibacter sphaeroides (strain ATCC 17029 / ATH 2.4.9) (Rhodobacter sphaeroides).